The sequence spans 290 residues: 4-diphosphocytidyl-2-C-methyl-D-erythritol kinase (290 aa).

Residue Lys-13 is part of the active site. 96-106 (PMGGGIGGGSS) is a binding site for ATP. Asp-138 is a catalytic residue.

Belongs to the GHMP kinase family. IspE subfamily.

It carries out the reaction 4-CDP-2-C-methyl-D-erythritol + ATP = 4-CDP-2-C-methyl-D-erythritol 2-phosphate + ADP + H(+). The protein operates within isoprenoid biosynthesis; isopentenyl diphosphate biosynthesis via DXP pathway; isopentenyl diphosphate from 1-deoxy-D-xylulose 5-phosphate: step 3/6. Its function is as follows. Catalyzes the phosphorylation of the position 2 hydroxy group of 4-diphosphocytidyl-2C-methyl-D-erythritol. This chain is 4-diphosphocytidyl-2-C-methyl-D-erythritol kinase, found in Vibrio campbellii (strain ATCC BAA-1116).